The following is a 265-amino-acid chain: Energy-coupling factor transporter transmembrane protein EcfT (265 aa).

6 helical membrane passes run 29–49 (VMAF…ALMF), 63–83 (FLFF…TLLL), 94–114 (LVDL…AMMF), 117–137 (FVLI…IELT), 143–163 (ILAP…MLSI), and 243–263 (RFAD…LFWL).

Belongs to the energy-coupling factor EcfT family. Forms a stable energy-coupling factor (ECF) transporter complex composed of 2 membrane-embedded substrate-binding proteins (S component), 2 ATP-binding proteins (A component) and 2 transmembrane proteins (T component). May be able to interact with more than 1 S component at a time.

It is found in the cell membrane. In terms of biological role, transmembrane (T) component of an energy-coupling factor (ECF) ABC-transporter complex. Unlike classic ABC transporters this ECF transporter provides the energy necessary to transport a number of different substrates. In Listeria innocua serovar 6a (strain ATCC BAA-680 / CLIP 11262), this protein is Energy-coupling factor transporter transmembrane protein EcfT.